A 287-amino-acid chain; its full sequence is MQIFGKILGAFFGFLFGGVFGALFGLFIGHQFDKARRLSQAGFKTAGFGQGPSQAQRQEEFFKSAFAVMGHVAKAKGQVTKEEIQLASAMMDRMSLHGEQRRAAQDAFREGKERDFPLEQLLERVKIATSGRFDLLQFFLELQISAAFADGDVHPSERNVLHKIARGLGFSSEQLERRLQMQEAAFRFQRQGGFGGQQHQSHHSSSHGGWQQASQTDRLADAYKILGIDANADGKEVKRAYRKLMNEHHPDKLMAKGLPPEMMNMAKEKSQEIQSAYDLIKKEKGFK.

Residues 1–6 lie on the Periplasmic side of the membrane; sequence MQIFGK. A helical transmembrane segment spans residues 7-30; sequence ILGAFFGFLFGGVFGALFGLFIGH. Topologically, residues 31–287 are cytoplasmic; it reads QFDKARRLSQ…DLIKKEKGFK (257 aa). The tract at residues 192-213 is disordered; that stretch reads GGFGGQQHQSHHSSSHGGWQQA. Residues 221–287 form the J domain; that stretch reads DAYKILGIDA…DLIKKEKGFK (67 aa).

As to quaternary structure, homodimer.

It localises to the cell inner membrane. Regulatory DnaK co-chaperone. Direct interaction between DnaK and DjlA is needed for the induction of the wcaABCDE operon, involved in the synthesis of a colanic acid polysaccharide capsule, possibly through activation of the RcsB/RcsC phosphotransfer signaling pathway. The colanic acid capsule may help the bacterium survive conditions outside the host. In Vibrio vulnificus (strain YJ016), this protein is Co-chaperone protein DjlA.